Consider the following 367-residue polypeptide: MNVFDTLQQSKKLPDVYRQMTRVELEERIRQHKERLGKKLLMLGHHYQRDEVFQFADQTGDSLQLAQIAAKEKEAQFIVFCGVHFMAETADLLTSEEQTVLLPDLRAGCSMADMADIHQTERAWERLQLMFGDTILPLTYVNSTAAIKAFCGRNGGATVTSSNAKKMLEWAFTQKERLLFLPDQHLGRNTAYELGIPLEAMAVWNPETERLETDQPLENIRVILWKGHCSVHEKFTVKHIEHLRKNEPDMSIIVHPECTHDVVIHADDAGSTHYIIKTIESADSGTKWAVGTEMNLVNRLANEHPDKEIVSLNPTMCPCLTMNRIDIEHLCWSLDQLAEGVFQHPIKVEDKDRGPALLALQRMLDRA.

Iminosuccinate-binding residues include His45 and Ser62. Position 109 (Cys109) interacts with [4Fe-4S] cluster. Iminosuccinate is bound by residues 140–142 (YVN) and Ser161. Cys229 provides a ligand contact to [4Fe-4S] cluster. Iminosuccinate-binding positions include 255-257 (HPE) and Thr272. Position 319 (Cys319) interacts with [4Fe-4S] cluster.

Belongs to the quinolinate synthase family. Type 3 subfamily. Requires [4Fe-4S] cluster as cofactor.

The protein localises to the cytoplasm. It carries out the reaction iminosuccinate + dihydroxyacetone phosphate = quinolinate + phosphate + 2 H2O + H(+). Its pathway is cofactor biosynthesis; NAD(+) biosynthesis; quinolinate from iminoaspartate: step 1/1. Functionally, catalyzes the condensation of iminoaspartate with dihydroxyacetone phosphate to form quinolinate. The sequence is that of Quinolinate synthase from Halalkalibacterium halodurans (strain ATCC BAA-125 / DSM 18197 / FERM 7344 / JCM 9153 / C-125) (Bacillus halodurans).